A 392-amino-acid polypeptide reads, in one-letter code: MAEPSPAKVYSTGGLYRRWLGAILANDQGLDPEQLTQAALSALSQTSLRRDWPGVSAVLAAIALDLQRHDLRLEQVLFGCRFLNPVGLAAGFDKNGVAASIWDRFGFGFAELGTVTWHGQTGNPRPRLFRLAAEQAALNRMGFNNNGAEVMRRTLEKQALPSPGQRPAVLGLNLGKSRITPLEQAPDDYALSLELLAPLADYAVINVSSPNTPGLRDLQDASQLRRLVERLRRLPGCPPLLVKIAPDLEDDAIDGLARLAYEEGLAGVIAVNTSLDRFGLDGRVLPKTGRTLAEEAGGLSGAPLRQRALEVLRRLRATAGPALPLIGVGGIDSPEAAWERISAGASLVQLYTGWIFKGPDLVPNILDGLIGQLDRHGFRHVSEAVGSGVPWQ.

Residues Ala-90–Lys-94 and Thr-114 each bind FMN. Lys-94 contacts substrate. Asn-139–Phe-143 lines the substrate pocket. Asn-173 and Asn-206 together coordinate FMN. Asn-206 provides a ligand contact to substrate. Ser-209 functions as the Nucleophile in the catalytic mechanism. Position 211 (Asn-211) interacts with substrate. Residues Lys-243 and Val-271 each coordinate FMN. Asn-272–Thr-273 serves as a coordination point for substrate. FMN-binding positions include Gly-301, Gly-330, and Tyr-351–Thr-352.

The protein belongs to the dihydroorotate dehydrogenase family. Type 2 subfamily. In terms of assembly, monomer. FMN serves as cofactor.

It localises to the cell membrane. It carries out the reaction (S)-dihydroorotate + a quinone = orotate + a quinol. The protein operates within pyrimidine metabolism; UMP biosynthesis via de novo pathway; orotate from (S)-dihydroorotate (quinone route): step 1/1. Functionally, catalyzes the conversion of dihydroorotate to orotate with quinone as electron acceptor. The chain is Dihydroorotate dehydrogenase (quinone) from Prochlorococcus marinus (strain MIT 9313).